The chain runs to 710 residues: Lactotransferrin (710 aa).

The first 19 residues, 1–19 (MKLVFLVLLFLGALGLCLA), serve as a signal peptide directing secretion. A Phosphoserine; alternate modification is found at Phe-10. The O-linked (GlcNAc) serine; alternate glycan is linked to Phe-10. The critical for glycosaminoglycan, lipid A, lysozyme and DNA binding stretch occupies residues 20–24 (GRRRS). Bactericidal and antifungal activity regions lie at residues 20-29 (GRRRSVQWCA) and 39-49 (FQWQRNMRKVR). The important for full bactericidal and antifungal activities stretch occupies residues 21 to 22 (RR). Transferrin-like domains follow at residues 25–352 (VQWC…NLRK) and 364–695 (VVWC…NLKK). Intrachain disulfides connect Cys-28–Cys-64 and Cys-38–Cys-55. Interaction with PspA stretches follow at residues 39–46 (FQWQRNMR) and 57–58 (KR). Positions 39–49 (FQWQRNMRKVR) are interaction with lipopolysaccharide. Residues 46-51 (RKVRGP) are involved in glycosaminoglycan binding. Residue Asp-79 coordinates Fe(3+). Lys-92 is a catalytic residue. Tyr-111 contacts Fe(3+). 4 disulfide bridges follow: Cys-134-Cys-217, Cys-176-Cys-192, Cys-189-Cys-200, and Cys-250-Cys-264. Positions 136, 140, 142, and 143 each coordinate hydrogencarbonate. Residue Asn-156 is glycosylated (N-linked (GlcNAc...) asparagine). Tyr-211 provides a ligand contact to Fe(3+). His-272 contributes to the Fe(3+) binding site. Ser-278 (nucleophile) is an active-site residue. Disulfide bonds link Cys-367–Cys-399 and Cys-377–Cys-390. Residues Gln-379 and Ser-391 each participate in a glycyl lysine isopeptide (Lys-Gly) (interchain with G-Cter in ubiquitin) cross-link. Asp-414 and Tyr-454 together coordinate Fe(3+). 8 disulfide bridges follow: Cys-424-Cys-705, Cys-446-Cys-668, Cys-478-Cys-553, Cys-502-Cys-696, Cys-512-Cys-526, Cys-523-Cys-536, Cys-594-Cys-608, and Cys-646-Cys-651. Residues Thr-480, Arg-484, Ala-486, and Gly-487 each coordinate hydrogencarbonate. Asn-497 is a glycosylation site (N-linked (GlcNAc...) asparagine). Tyr-547 is a binding site for Fe(3+). His-616 contacts Fe(3+). Asn-642 carries an N-linked (GlcNAc...) asparagine glycan.

The protein belongs to the transferrin family. Monomer. Found in a complex with LTF, CLU, EPPIN and SEMG1. Found in a complex with MPO and LTF; interacts directly with CP, allows Fe(3+) incorporation into LTF and activation of CP ferroxidase activity. Post-translationally, phosphorylation at Ser-10 activates the transcriptional activity. Phosphorylation at Ser-10 also promotes proteasomal degradation. Alternatively can undergo O-GlcNAcylation at Ser-10. O-GlcNAcylation at Ser-10 inhibits DNA binding and negatively regulates the transcriptional activity. Alternatively can undergo phosphorylation at Ser-10. In terms of processing, poly-N-acetyllactosaminic carbohydrate moiety seems to be needed for TLR4 activation. As to expression, high levels are found in saliva and tears, intermediate levels in serum and plasma, and low levels in urine. In kidney, detected in the distal collecting tubules in the medulla but not in the cortical region or in blood vessels. Detected in peripheral blood neutrophils (at protein level). Isoform 1 and isoform DeltaLf are expressed in breast, prostate, spleen, pancreas, kidney, small intestine, lung, skeletal muscle, uterus, thymus and fetal liver. Isoform 1 is expressed in brain, testis and peripheral blood leukocytes; isoform DeltaLf is barely detectable in these tissues. Isoform DeltaLf is expressed in placenta, liver and ovary; isoform 1 is barely detectable in these tissues. In kidney, isoform 1 is expressed at high levels in the collecting tubules of the medulla but at very low levels in the cortex.

The protein resides in the secreted. It is found in the cytoplasmic granule. The protein localises to the cytoplasm. Its subcellular location is the nucleus. Functionally, transferrins are iron binding transport proteins which can bind two Fe(3+) ions in association with the binding of an anion, usually bicarbonate. Major iron-binding and multifunctional protein found in exocrine fluids such as breast milk and mucosal secretions. Has antimicrobial activity, which depends on the extracellular cation concentration. Antimicrobial properties include bacteriostasis, which is related to its ability to sequester free iron and thus inhibit microbial growth, as well as direct bactericidal properties leading to the release of lipopolysaccharides from the bacterial outer membrane. Can also prevent bacterial biofilm development in P.aeruginosa infection. Has weak antifungal activity against C.albicans. Has anabolic, differentiating and anti-apoptotic effects on osteoblasts and can also inhibit osteoclastogenesis, possibly playing a role in the regulation of bone growth. Promotes binding of species C adenoviruses to epithelial cells, promoting adenovirus infection. Can inhibit papillomavirus infections. Stimulates the TLR4 signaling pathway leading to NF-kappa-B activation and subsequent pro-inflammatory cytokine production while also interfering with the lipopolysaccharide (LPS)-stimulated TLR4 signaling. Inhibits neutrophil granulocyte migration to sites of apoptosis, when secreted by apoptotic cells. Stimulates VEGFA-mediated endothelial cell migration and proliferation. Binds heparin, chondroitin sulfate and possibly other glycosaminoglycans (GAGs). Also binds specifically to pneumococcal surface protein A (PspA), the lipid A portion of bacterial lipopolysaccharide (LPS), lysozyme and DNA. Its function is as follows. Lactoferricin binds to the bacterial surface and is crucial for the bactericidal functions. Has some antiviral activity against papillomavirus infection. N-terminal region shows strong antifungal activity against C.albicans. Contains two BBXB heparin-binding consensus sequences that appear to form the predominate functional GAG-binding site. In terms of biological role, has antimicrobial activity and is able to permeabilize different ions through liposomal membranes. Functionally, has opioid antagonist activity. Shows preference for mu-receptor. Has opioid antagonist activity. Shows higher degrees of preference for kappa-receptors than for mu-receptors. Its function is as follows. The lactotransferrin transferrin-like domain 1 functions as a serine protease of the peptidase S60 family that cuts arginine rich regions. This function contributes to the antimicrobial activity. Shows a preferential cleavage at -Arg-Ser-Arg-Arg-|- and -Arg-Arg-Ser-Arg-|-, and of Z-Phe-Arg-|-aminomethylcoumarin sites. In terms of biological role, transcription factor with antiproliferative properties and ability to induce cell cycle arrest. Binds to the DeltaLf response element found in the SKP1, BAX, DCPS, and SELENOH promoters. The chain is Lactotransferrin from Homo sapiens (Human).